Here is a 130-residue protein sequence, read N- to C-terminus: Small ribosomal subunit protein uS8 (130 aa).

The protein belongs to the universal ribosomal protein uS8 family. In terms of assembly, part of the 30S ribosomal subunit. Contacts proteins S5 and S12.

One of the primary rRNA binding proteins, it binds directly to 16S rRNA central domain where it helps coordinate assembly of the platform of the 30S subunit. The sequence is that of Small ribosomal subunit protein uS8 from Coxiella burnetii (strain RSA 331 / Henzerling II).